Reading from the N-terminus, the 716-residue chain is Calpain-1 catalytic subunit (716 aa).

In terms of domain architecture, Calpain catalytic spans 55 to 354 (LFRDEAFPPV…FTRLEICNLT (300 aa)). Gln-109 and Asp-114 together coordinate Ca(2+). Residues Cys-115, His-272, and Asn-296 contribute to the active site. Ca(2+) contacts are provided by Asp-318 and Glu-323. The residue at position 354 (Thr-354) is a Phosphothreonine. The tract at residues 355 to 528 (PDALKSQRFR…KSAGTQELDD (174 aa)) is domain III. A linker region spans residues 529–544 (QVQANLPDEQVLSEEE). 4 EF-hand domains span residues 543 to 578 (EEIDENFKSLFRQLAGEDMEISVKELRTILNRIISK), 587 to 620 (FSLESCRSMVNLMDRDGNGKLGLVEFNILWNRIR), 617 to 652 (NRIRNYLSIFRKFDLDKSGSMSAYEMRMAIEFAGFK), and 682 to 716 (VRLETMFRFFKTLDTDLDGVVTFDLFKWLQLTMFA). A domain IV region spans residues 545–715 (IDENFKSLFR…LFKWLQLTMF (171 aa)). Ca(2+)-binding residues include Asp-600, Asp-602, Asn-604, Lys-606, Glu-611, Asp-630, Asp-632, Ser-634, Ser-636, and Glu-641.

The protein belongs to the peptidase C2 family. As to quaternary structure, forms a heterodimer with a small (regulatory) subunit CAPNS1. Ca(2+) serves as cofactor. Undergoes calcium-induced successive autoproteolytic cleavages that generate a membrane-bound 78 kDa active form and an intracellular 75 kDa active form. Calpastatin reduces with high efficiency the transition from 78 kDa to 75 kDa calpain forms.

Its subcellular location is the cytoplasm. The protein localises to the cell membrane. The catalysed reaction is Broad endopeptidase specificity.. With respect to regulation, activated by micromolar concentrations of calcium and inhibited by calpastatin. In terms of biological role, calcium-regulated non-lysosomal thiol-protease which catalyzes limited proteolysis of substrates involved in cytoskeletal remodeling and signal transduction. Proteolytically cleaves CTBP1. Cleaves and activates caspase-7 (CASP7). The chain is Calpain-1 catalytic subunit from Bos taurus (Bovine).